The following is a 356-amino-acid chain: S-adenosylmethionine:tRNA ribosyltransferase-isomerase (356 aa).

This sequence belongs to the QueA family. In terms of assembly, monomer.

The protein resides in the cytoplasm. The catalysed reaction is 7-aminomethyl-7-carbaguanosine(34) in tRNA + S-adenosyl-L-methionine = epoxyqueuosine(34) in tRNA + adenine + L-methionine + 2 H(+). It functions in the pathway tRNA modification; tRNA-queuosine biosynthesis. Transfers and isomerizes the ribose moiety from AdoMet to the 7-aminomethyl group of 7-deazaguanine (preQ1-tRNA) to give epoxyqueuosine (oQ-tRNA). The sequence is that of S-adenosylmethionine:tRNA ribosyltransferase-isomerase from Serratia proteamaculans (strain 568).